Here is a 500-residue protein sequence, read N- to C-terminus: Lysine--tRNA ligase (500 aa).

The Mg(2+) site is built by Glu410 and Glu417.

This sequence belongs to the class-II aminoacyl-tRNA synthetase family. As to quaternary structure, homodimer. Mg(2+) serves as cofactor.

The protein localises to the cytoplasm. The catalysed reaction is tRNA(Lys) + L-lysine + ATP = L-lysyl-tRNA(Lys) + AMP + diphosphate. The polypeptide is Lysine--tRNA ligase (Pseudomonas fluorescens (strain ATCC BAA-477 / NRRL B-23932 / Pf-5)).